A 402-amino-acid chain; its full sequence is Olfactomedin-like protein 1 (402 aa).

The first 28 residues, 1 to 28 (MMVALRGASALLVLFLAAFLPPPQCTQD), serve as a signal peptide directing secretion. A glycan (N-linked (GlcNAc...) asparagine) is linked at Asn66. Residues 79 to 133 (SEYKSAVGNLALRVERAQREIDYIQYLREADECIESEDKTLAEMLLQEAEEEKKI) are a coiled coil. N-linked (GlcNAc...) asparagine glycans are attached at residues Asn138 and Asn183. Residues 140 to 397 (SCDNMLMGIK…QIIYKLQTKR (258 aa)) enclose the Olfactomedin-like domain. Cys141 and Cys324 are disulfide-bonded.

Highly N-glycosylated. Mainly expressed in the small intestine, liver, lung and heart.

The protein resides in the secreted. This chain is Olfactomedin-like protein 1 (OLFML1), found in Homo sapiens (Human).